A 363-amino-acid chain; its full sequence is NAD(P)H-quinone oxidoreductase subunit 1, chloroplastic (363 aa).

The next 8 membrane-spanning stretches (helical) occupy residues 27 to 47 (LIPI…IVWL), 93 to 113 (WLFS…YLVV), 124 to 144 (LGVG…GLLM), 162 to 182 (AAQA…VALL), 200 to 220 (ILGW…IASL), 250 to 270 (FGLF…FVSV), 303 to 323 (ATLG…LSIL), and 343 to 363 (FLLP…LALL).

It belongs to the complex I subunit 1 family. In terms of assembly, NDH is composed of at least 16 different subunits, 5 of which are encoded in the nucleus.

Its subcellular location is the plastid. The protein localises to the chloroplast thylakoid membrane. The enzyme catalyses a plastoquinone + NADH + (n+1) H(+)(in) = a plastoquinol + NAD(+) + n H(+)(out). It carries out the reaction a plastoquinone + NADPH + (n+1) H(+)(in) = a plastoquinol + NADP(+) + n H(+)(out). Functionally, NDH shuttles electrons from NAD(P)H:plastoquinone, via FMN and iron-sulfur (Fe-S) centers, to quinones in the photosynthetic chain and possibly in a chloroplast respiratory chain. The immediate electron acceptor for the enzyme in this species is believed to be plastoquinone. Couples the redox reaction to proton translocation, and thus conserves the redox energy in a proton gradient. This Chaetosphaeridium globosum (Charophycean green alga) protein is NAD(P)H-quinone oxidoreductase subunit 1, chloroplastic.